A 284-amino-acid polypeptide reads, in one-letter code: Ribosomal RNA small subunit methyltransferase A (284 aa).

S-adenosyl-L-methionine is bound by residues Asn22, Leu24, Gly49, Glu70, Asp97, and Asn117.

It belongs to the class I-like SAM-binding methyltransferase superfamily. rRNA adenine N(6)-methyltransferase family. RsmA subfamily.

Its subcellular location is the cytoplasm. It carries out the reaction adenosine(1518)/adenosine(1519) in 16S rRNA + 4 S-adenosyl-L-methionine = N(6)-dimethyladenosine(1518)/N(6)-dimethyladenosine(1519) in 16S rRNA + 4 S-adenosyl-L-homocysteine + 4 H(+). Its function is as follows. Specifically dimethylates two adjacent adenosines (A1518 and A1519) in the loop of a conserved hairpin near the 3'-end of 16S rRNA in the 30S particle. May play a critical role in biogenesis of 30S subunits. The sequence is that of Ribosomal RNA small subunit methyltransferase A from Desulforapulum autotrophicum (strain ATCC 43914 / DSM 3382 / VKM B-1955 / HRM2) (Desulfobacterium autotrophicum).